The chain runs to 424 residues: Tyrosine--tRNA ligase (424 aa).

Tyr37 provides a ligand contact to L-tyrosine. The 'HIGH' region signature appears at 42–51 (PTADSLHLGH). Positions 175 and 179 each coordinate L-tyrosine. The 'KMSKS' region signature appears at 235 to 239 (KFGKT). An ATP-binding site is contributed by Lys238. In terms of domain architecture, S4 RNA-binding spans 357–414 (AELQKALVSAQLAPSRSQARTLIQSSSISVNGKKQLKPEYIFTSEDRLLDRYTLLRRG).

This sequence belongs to the class-I aminoacyl-tRNA synthetase family. TyrS type 1 subfamily. Homodimer.

The protein resides in the cytoplasm. It catalyses the reaction tRNA(Tyr) + L-tyrosine + ATP = L-tyrosyl-tRNA(Tyr) + AMP + diphosphate + H(+). In terms of biological role, catalyzes the attachment of tyrosine to tRNA(Tyr) in a two-step reaction: tyrosine is first activated by ATP to form Tyr-AMP and then transferred to the acceptor end of tRNA(Tyr). The polypeptide is Tyrosine--tRNA ligase (Hamiltonella defensa subsp. Acyrthosiphon pisum (strain 5AT)).